The primary structure comprises 94 residues: Small ribosomal subunit protein uS19c (94 aa).

This sequence belongs to the universal ribosomal protein uS19 family.

It localises to the plastid. Protein S19 forms a complex with S13 that binds strongly to the 16S ribosomal RNA. The polypeptide is Small ribosomal subunit protein uS19c (rps19) (Epifagus virginiana (Beechdrops)).